The sequence spans 514 residues: UDP-N-acetylmuramate--L-alanine ligase (514 aa).

127-133 (GTHGKTT) is a binding site for ATP. A compositionally biased stretch (low complexity) spans 495–505 (IGGTIPDIPGG). Positions 495-514 (IGGTIPDIPGGSTPDASAAG) are disordered.

This sequence belongs to the MurCDEF family.

The protein resides in the cytoplasm. It catalyses the reaction UDP-N-acetyl-alpha-D-muramate + L-alanine + ATP = UDP-N-acetyl-alpha-D-muramoyl-L-alanine + ADP + phosphate + H(+). It functions in the pathway cell wall biogenesis; peptidoglycan biosynthesis. In terms of biological role, cell wall formation. The sequence is that of UDP-N-acetylmuramate--L-alanine ligase from Salinispora tropica (strain ATCC BAA-916 / DSM 44818 / JCM 13857 / NBRC 105044 / CNB-440).